The sequence spans 245 residues: Aquaporin SIP1-1 (245 aa).

Helical transmembrane passes span 14–34 (AVVTFLWVLCASALGASTAAV) and 55–75 (LLSVLLFTFDLLCGALGGASF). The NPA 1 signature appears at 76–78 (NPT). The next 3 membrane-spanning stretches (helical) occupy residues 100 to 120 (FPAQAAGAVGGALAISELMPA), 138 to 158 (GALAEGVLTFVITLTVLWVIV), and 164 to 184 (VILKTLLLSTSIVSVILAGAE). The NPA 2 motif lies at 191 to 193 (NPA). Residues 213-233 (VYWICPFIGAMLAGWIFRVVF) traverse the membrane as a helical segment.

It belongs to the MIP/aquaporin (TC 1.A.8) family. SIP (TC 1.A.8.10) subfamily.

It localises to the membrane. Aquaporins facilitate the transport of water and small neutral solutes across cell membranes. This is Aquaporin SIP1-1 (SIP1-1) from Zea mays (Maize).